The sequence spans 461 residues: Acetylornithine aminotransferase, mitochondrial (461 aa).

The tract at residues 36–56 (YATASQLTHPDPTEDSPSGKM) is disordered. Lysine 312 carries the post-translational modification N6-(pyridoxal phosphate)lysine.

Belongs to the class-III pyridoxal-phosphate-dependent aminotransferase family. Pyridoxal 5'-phosphate serves as cofactor.

Its subcellular location is the mitochondrion matrix. The enzyme catalyses N(2)-acetyl-L-ornithine + 2-oxoglutarate = N-acetyl-L-glutamate 5-semialdehyde + L-glutamate. It participates in amino-acid biosynthesis; L-arginine biosynthesis; N(2)-acetyl-L-ornithine from L-glutamate: step 4/4. The protein is Acetylornithine aminotransferase, mitochondrial (arg-8) of Neurospora crassa (strain ATCC 24698 / 74-OR23-1A / CBS 708.71 / DSM 1257 / FGSC 987).